Consider the following 717-residue polypeptide: Delta-1-pyrroline-5-carboxylate synthase (717 aa).

Residues 1 to 296 are glutamate 5-kinase; that stretch reads MDAVDSTRAF…WAPVGDVGAR (296 aa). Substrate contacts are provided by Ser60, Asp157, and Asn176. Residues 196–197 and 236–242 each bind ATP; these read SD and RGGMTAK. A gamma-glutamyl phosphate reductase region spans residues 297-717; sequence DMAVAARESS…YTHKDLTSHA (421 aa).

It in the N-terminal section; belongs to the glutamate 5-kinase family. This sequence in the C-terminal section; belongs to the gamma-glutamyl phosphate reductase family. As to expression, expressed at high levels in leaves and is inducible in roots subjected to salt stress.

It catalyses the reaction L-glutamate + ATP = L-glutamyl 5-phosphate + ADP. It carries out the reaction L-glutamate 5-semialdehyde + phosphate + NADP(+) = L-glutamyl 5-phosphate + NADPH + H(+). Its pathway is amino-acid biosynthesis; L-proline biosynthesis; L-glutamate 5-semialdehyde from L-glutamate: step 1/2. It participates in amino-acid biosynthesis; L-proline biosynthesis; L-glutamate 5-semialdehyde from L-glutamate: step 2/2. With respect to regulation, feedback regulated by proline. Functionally, P5CS plays a key role in proline biosynthesis, leading to osmoregulation in plants. In Actinidia deliciosa (Kiwi), this protein is Delta-1-pyrroline-5-carboxylate synthase.